Here is a 911-residue protein sequence, read N- to C-terminus: Protein translocase subunit SecA (911 aa).

ATP contacts are provided by residues Gln-90, 108–112 (GEGKT), and Asp-515. Residues Cys-891, Cys-893, Cys-902, and His-903 each contribute to the Zn(2+) site.

This sequence belongs to the SecA family. Monomer and homodimer. Part of the essential Sec protein translocation apparatus which comprises SecA, SecYEG and auxiliary proteins SecDF-YajC and YidC. Zn(2+) is required as a cofactor.

It localises to the cell inner membrane. The protein resides in the cytoplasm. The enzyme catalyses ATP + H2O + cellular proteinSide 1 = ADP + phosphate + cellular proteinSide 2.. Part of the Sec protein translocase complex. Interacts with the SecYEG preprotein conducting channel. Has a central role in coupling the hydrolysis of ATP to the transfer of proteins into and across the cell membrane, serving both as a receptor for the preprotein-SecB complex and as an ATP-driven molecular motor driving the stepwise translocation of polypeptide chains across the membrane. The sequence is that of Protein translocase subunit SecA from Blochmanniella pennsylvanica (strain BPEN).